Reading from the N-terminus, the 385-residue chain is Lipid-A-disaccharide synthase (385 aa).

Belongs to the LpxB family.

The enzyme catalyses a lipid X + a UDP-2-N,3-O-bis[(3R)-3-hydroxyacyl]-alpha-D-glucosamine = a lipid A disaccharide + UDP + H(+). It functions in the pathway bacterial outer membrane biogenesis; LPS lipid A biosynthesis. In terms of biological role, condensation of UDP-2,3-diacylglucosamine and 2,3-diacylglucosamine-1-phosphate to form lipid A disaccharide, a precursor of lipid A, a phosphorylated glycolipid that anchors the lipopolysaccharide to the outer membrane of the cell. This is Lipid-A-disaccharide synthase from Pseudoalteromonas translucida (strain TAC 125).